We begin with the raw amino-acid sequence, 378 residues long: 3-dehydroquinate synthase (378 aa).

Residues 115–119 (GVVGD), 139–140 (TS), K152, and K161 each bind NAD(+). E194, H256, and H275 together coordinate Zn(2+).

It belongs to the sugar phosphate cyclases superfamily. Dehydroquinate synthase family. Co(2+) is required as a cofactor. Zn(2+) serves as cofactor. It depends on NAD(+) as a cofactor.

It localises to the cytoplasm. It catalyses the reaction 7-phospho-2-dehydro-3-deoxy-D-arabino-heptonate = 3-dehydroquinate + phosphate. The protein operates within metabolic intermediate biosynthesis; chorismate biosynthesis; chorismate from D-erythrose 4-phosphate and phosphoenolpyruvate: step 2/7. In terms of biological role, catalyzes the conversion of 3-deoxy-D-arabino-heptulosonate 7-phosphate (DAHP) to dehydroquinate (DHQ). In Brucella suis (strain ATCC 23445 / NCTC 10510), this protein is 3-dehydroquinate synthase.